The primary structure comprises 282 residues: uncharacterized protein (282 aa).

Residues 205–277 (LAQQRRVYAQ…DELQNKARDA (73 aa)) adopt a coiled-coil conformation.

This is an uncharacterized protein from Treponema pallidum (strain Nichols).